The sequence spans 125 residues: Large ribosomal subunit protein bL12 (125 aa).

Belongs to the bacterial ribosomal protein bL12 family. In terms of assembly, homodimer. Part of the ribosomal stalk of the 50S ribosomal subunit. Forms a multimeric L10(L12)X complex, where L10 forms an elongated spine to which 2 to 4 L12 dimers bind in a sequential fashion. Binds GTP-bound translation factors.

In terms of biological role, forms part of the ribosomal stalk which helps the ribosome interact with GTP-bound translation factors. Is thus essential for accurate translation. The sequence is that of Large ribosomal subunit protein bL12 from Methylorubrum extorquens (strain CM4 / NCIMB 13688) (Methylobacterium extorquens).